Consider the following 156-residue polypeptide: Small ribosomal subunit protein uS7 (156 aa).

This sequence belongs to the universal ribosomal protein uS7 family. As to quaternary structure, part of the 30S ribosomal subunit. Contacts proteins S9 and S11.

Functionally, one of the primary rRNA binding proteins, it binds directly to 16S rRNA where it nucleates assembly of the head domain of the 30S subunit. Is located at the subunit interface close to the decoding center, probably blocks exit of the E-site tRNA. The polypeptide is Small ribosomal subunit protein uS7 (Desulforamulus reducens (strain ATCC BAA-1160 / DSM 100696 / MI-1) (Desulfotomaculum reducens)).